Here is a 467-residue protein sequence, read N- to C-terminus: Argininosuccinate lyase (467 aa).

This sequence belongs to the lyase 1 family. Argininosuccinate lyase subfamily.

The protein resides in the cytoplasm. The catalysed reaction is 2-(N(omega)-L-arginino)succinate = fumarate + L-arginine. It functions in the pathway amino-acid biosynthesis; L-arginine biosynthesis; L-arginine from L-ornithine and carbamoyl phosphate: step 3/3. The chain is Argininosuccinate lyase from Anaeromyxobacter sp. (strain K).